The primary structure comprises 469 residues: Ribulose bisphosphate carboxylase large chain (469 aa).

Position 5 is an N6,N6,N6-trimethyllysine (Lys-5). Positions 114 and 164 each coordinate substrate. Catalysis depends on Lys-166, which acts as the Proton acceptor. Substrate is bound at residue Lys-168. Residues Lys-192, Asp-194, and Glu-195 each coordinate Mg(2+). Position 192 is an N6-carboxylysine (Lys-192). The active-site Proton acceptor is the His-285. Substrate is bound by residues Arg-286, His-318, and Ser-370.

Belongs to the RuBisCO large chain family. Type I subfamily. As to quaternary structure, heterohexadecamer of 8 large chains and 8 small chains; disulfide-linked. The disulfide link is formed within the large subunit homodimers. The cofactor is Mg(2+). The disulfide bond which can form in the large chain dimeric partners within the hexadecamer appears to be associated with oxidative stress and protein turnover.

The protein localises to the plastid. Its subcellular location is the chloroplast. The enzyme catalyses 2 (2R)-3-phosphoglycerate + 2 H(+) = D-ribulose 1,5-bisphosphate + CO2 + H2O. It carries out the reaction D-ribulose 1,5-bisphosphate + O2 = 2-phosphoglycolate + (2R)-3-phosphoglycerate + 2 H(+). In terms of biological role, ruBisCO catalyzes two reactions: the carboxylation of D-ribulose 1,5-bisphosphate, the primary event in carbon dioxide fixation, as well as the oxidative fragmentation of the pentose substrate in the photorespiration process. Both reactions occur simultaneously and in competition at the same active site. This chain is Ribulose bisphosphate carboxylase large chain, found in Antirhea lucida (Palo iloron).